Here is a 569-residue protein sequence, read N- to C-terminus: Matrix metalloproteinase-21 (569 aa).

The N-terminal stretch at 1-24 (MLAASIFRPTLLLCWLAAPWPTQP) is a signal peptide. Residues 25–144 (ESLFHSRDRS…GPPPRARSRR (120 aa)) constitute a propeptide that is removed on maturation. The Cysteine switch motif lies at 115 to 122 (PRCGVPDM). Residues 115 to 166 (PRCGVPDMRPPPPSAPPSPPGPPPRARSRRSPRAPLSLSRRGWQPRGYPDGG) form a disordered region. Cys117 serves as a coordination point for Zn(2+). Residues 122 to 139 (MRPPPPSAPPSPPGPPPR) show a composition bias toward pro residues. Low complexity predominate over residues 147 to 156 (RAPLSLSRRG). Zn(2+) is bound at residue His283. Glu284 is a catalytic residue. Zn(2+)-binding residues include His287 and His293. Residues Cys329 and Cys560 are joined by a disulfide bond. Hemopexin repeat units follow at residues 330–389 (EGSF…WPGI), 391–447 (THNI…FPGI), 448–496 (PSPL…FPAV), and 503–559 (FRNI…WFDV). Asn372 carries an N-linked (GlcNAc...) asparagine glycan.

The protein belongs to the peptidase M10A family. Zn(2+) is required as a cofactor. The cofactor is Ca(2+). The precursor is cleaved by a furin endopeptidase. Identified in fetal brain, kidney and liver. In adult tissues found primarily in ovary, kidney, liver, lung, placenta, brain and peripheral blood leukocytes. Expressed as well in various cancer cell lines.

It is found in the secreted. Its function is as follows. Plays a specialized role in the generation of left-right asymmetry during embryogenesis. May act as a negative regulator of the NOTCH-signaling pathway. Cleaves alpha-1-antitrypsin. This chain is Matrix metalloproteinase-21 (MMP21), found in Homo sapiens (Human).